The following is an 899-amino-acid chain: Linoleate 13S-lipoxygenase 2-1, chloroplastic (899 aa).

The transit peptide at 1–40 (MLKPQLQQSSQSTKALIPSWNTNPLFLASFPINILNKNFR) directs the protein to the chloroplast. A PLAT domain is found at 78–200 (VQKQVNLNLS…DNPDKRIFFT (123 aa)). In terms of domain architecture, Lipoxygenase spans 203–899 (SYLPSQTPSG…GKGVPYSISI (697 aa)). A disordered region spans residues 252–287 (SNNDDAKRPVLGGKELPYPRRCKTGRPRSKKDPLSE). The span at 271-280 (RRCKTGRPRS) shows a compositional bias: basic residues. His-557, His-562, His-749, Asn-753, and Ile-899 together coordinate Fe cation.

This sequence belongs to the lipoxygenase family. Monomer. Fe cation is required as a cofactor. As to expression, expressed in leaves and floral buds.

The protein localises to the plastid. The protein resides in the chloroplast stroma. Its subcellular location is the chloroplast thylakoid. The catalysed reaction is (9Z,12Z)-octadecadienoate + O2 = (13S)-hydroperoxy-(9Z,11E)-octadecadienoate. It carries out the reaction (9Z,12Z,15Z)-octadecatrienoate + O2 = (13S)-hydroperoxy-(9Z,11E,15Z)-octadecatrienoate. Its pathway is lipid metabolism; oxylipin biosynthesis. In terms of biological role, plant lipoxygenase involved in a number of diverse aspects of plant physiology including growth and development, pest resistance, and senescence. May not be involved in the bulk production of jasmonate upon wounding. Catalyzes the hydroperoxidation of lipids containing a cis,cis-1,4-pentadiene structure. Linolenic acid is the preferred substrate, before linoleic and arachidonic acids. Also has some activity with phosphatidylglycerol, but not with galactolipids. In Solanum tuberosum (Potato), this protein is Linoleate 13S-lipoxygenase 2-1, chloroplastic.